Reading from the N-terminus, the 330-residue chain is Cathepsin K (330 aa).

Residues 1 to 16 form the signal peptide; that stretch reads MWGLKVVLLLPVMSSA. A propeptide spans 17-115 (activation peptide); that stretch reads LYPEEILDTQ…TLYIPDWEGR (99 aa). A glycan (N-linked (GlcNAc...) asparagine) is linked at asparagine 104. 3 disulfides stabilise this stretch: cysteine 137–cysteine 178, cysteine 171–cysteine 211, and cysteine 270–cysteine 319. Cysteine 140 is a catalytic residue. Catalysis depends on residues histidine 277 and asparagine 297.

The protein belongs to the peptidase C1 family. As to expression, expressed in the thyroid epithelial cells.

The protein localises to the lysosome. Its subcellular location is the secreted. It localises to the apical cell membrane. It carries out the reaction Broad proteolytic activity. With small-molecule substrates and inhibitors, the major determinant of specificity is P2, which is preferably Leu, Met &gt; Phe, and not Arg.. Thiol protease involved in osteoclastic bone resorption and may participate partially in the disorder of bone remodeling. Displays potent endoprotease activity against fibrinogen at acid pH. May play an important role in extracellular matrix degradation. Involved in the release of thyroid hormone thyroxine (T4) by limited proteolysis of TG/thyroglobulin in the thyroid follicle lumen. In Sus scrofa (Pig), this protein is Cathepsin K (CTSK).